Reading from the N-terminus, the 264-residue chain is Vitellin-degrading protease (264 aa).

The first 15 residues, 1–15 (MTNSLLICFTILGLA), serve as a signal peptide directing secretion. Residues 16 to 27 (ASSPTKPIGDIR) constitute a propeptide, activation peptide. Residues 28 to 253 (IVGGEDIVIT…LREWVDENIT (226 aa)) enclose the Peptidase S1 domain. An intrachain disulfide couples Cys53 to Cys69. Residues His68 and Asp113 each act as charge relay system in the active site. Cys178 and Cys194 form a disulfide bridge. Asp203 is a binding site for substrate. Cys205 and Cys229 are oxidised to a cystine. Ser209 acts as the Charge relay system in catalysis. A glycan (N-linked (GlcNAc...) asparagine) is linked at Asn251.

Belongs to the peptidase S1 family. Cleavage after Arg-27 leads to beta-VTN protease and subsequent cleavage after Arg-89 leads to alpha-VTN.

Its function is as follows. Responsible for the degradation of vitellin in eggs at the head pigmentation stage. This chain is Vitellin-degrading protease, found in Bombyx mori (Silk moth).